A 117-amino-acid chain; its full sequence is Colipase (117 aa).

Positions 1–22 (MNIFNILLPIVVLLLVFGLTAA) are cleaved as a signal peptide. Disulfide bonds link Cys39–Cys50, Cys45–Cys61, Cys49–Cys83, Cys71–Cys91, and Cys85–Cys109.

It belongs to the colipase family. Forms a 1:1 stoichiometric complex with pancreatic lipase.

It is found in the secreted. In terms of biological role, colipase is a cofactor of pancreatic lipase. It allows the lipase to anchor itself to the lipid-water interface. Without colipase the enzyme is washed off by bile salts, which have an inhibitory effect on the lipase. In Xenopus tropicalis (Western clawed frog), this protein is Colipase (clps).